The primary structure comprises 402 residues: Mannonate dehydratase 1 (402 aa).

Belongs to the mannonate dehydratase family. It depends on Fe(2+) as a cofactor. The cofactor is Mn(2+).

It catalyses the reaction D-mannonate = 2-dehydro-3-deoxy-D-gluconate + H2O. It functions in the pathway carbohydrate metabolism; pentose and glucuronate interconversion. In terms of biological role, catalyzes the dehydration of D-mannonate. This is Mannonate dehydratase 1 (uxuA1) from Agrobacterium fabrum (strain C58 / ATCC 33970) (Agrobacterium tumefaciens (strain C58)).